Here is a 235-residue protein sequence, read N- to C-terminus: Ribosomal RNA small subunit methyltransferase G (235 aa).

S-adenosyl-L-methionine contacts are provided by residues Gly74, Phe79, 97 to 99, 125 to 126, and Arg144; these read EAT and AE.

It belongs to the methyltransferase superfamily. RNA methyltransferase RsmG family.

Its subcellular location is the cytoplasm. Specifically methylates the N7 position of a guanine in 16S rRNA. The chain is Ribosomal RNA small subunit methyltransferase G from Dehalococcoides mccartyi (strain ATCC BAA-2100 / JCM 16839 / KCTC 5957 / BAV1).